The following is a 219-amino-acid chain: Thymidylate kinase (219 aa).

9 to 16 serves as a coordination point for ATP; it reads GIEGSGKT.

It belongs to the thymidylate kinase family.

It catalyses the reaction dTMP + ATP = dTDP + ADP. Phosphorylation of dTMP to form dTDP in both de novo and salvage pathways of dTTP synthesis. The sequence is that of Thymidylate kinase from Pelobacter propionicus (strain DSM 2379 / NBRC 103807 / OttBd1).